Reading from the N-terminus, the 135-residue chain is Small ribosomal subunit protein bS18 (135 aa).

The interval 1 to 65 is disordered; that stretch reads MARPDMGGPK…GDEGGGRRGF (65 aa). Residues 9–41 show a composition bias toward gly residues; the sequence is PKTGGFGGPRSGGFGGGGGGGGGFGGGGFGGGR. The span at 42–61 shows a compositional bias: basic and acidic residues; sequence GGDRGDRGDRDDRGGDEGGG.

Belongs to the bacterial ribosomal protein bS18 family. As to quaternary structure, part of the 30S ribosomal subunit. Forms a tight heterodimer with protein bS6.

Functionally, binds as a heterodimer with protein bS6 to the central domain of the 16S rRNA, where it helps stabilize the platform of the 30S subunit. This Anaeromyxobacter sp. (strain K) protein is Small ribosomal subunit protein bS18.